Here is a 1372-residue protein sequence, read N- to C-terminus: Capping protein, Arp2/3 and myosin-I linker protein 3 (1372 aa).

A disordered region spans residues 126 to 151; it reads RGNADTPEGPRDTSPNSETSTSTTHS. Over residues 138 to 151 the composition is skewed to low complexity; the sequence is TSPNSETSTSTTHS. LRR repeat units lie at residues 244–264, 274–295, 303–323, 335–357, 365–385, 392–413, 424–444, 455–475, 482–501, and 509–530; these read SLEELVLDNAGLKTDFVQKLA, VLHALTLSHNPIEDKGFLSLSQ, GLTKLCLAKTAISPRGLQALG, SLRYLDLSKNPGLLATDEANALY, ALVHLDLSGTDCVIDLLLGAL, HLTYLNLARNSCSHRKGREAPP, TLSHVNLSATKLPLEALRALL, DLHLDLSSCELRSAGAQALQE, CVGSLDLSDNGFDSDLLTLV, and SLKHLFLGKNFNVKAKTLEEIL. Disordered regions lie at residues 865 to 900, 970 to 1003, and 1024 to 1372; these read TLSDPPGCPGQGQDLSSRGRGRNHDHEETTDDELGT, KLRHQTQGRPRPPRTTPPGPGRPSMPAPGTRQEN, and ESSS…PGTD. A compositionally biased stretch (pro residues) spans 982-995; that stretch reads PRTTPPGPGRPSMP. The segment at 1040–1073 is necessary for localization at the cell membrane; that stretch reads SEAPLPPLQKKRRRGLFHFRRPRSFKGDRGPGSP. Residues 1048-1063 are compositionally biased toward basic residues; that stretch reads QKKRRRGLFHFRRPRS. Positions 1079-1098 are enriched in pro residues; the sequence is LPPPPPPPPTQESPPSPDPP. Residues 1099-1109 are compositionally biased toward low complexity; the sequence is SLGNNSSPCWS. Composition is skewed to basic and acidic residues over residues 1163–1177 and 1219–1229; these read ERAKGWSFDGKREGP and RRAEATWHIAE. Positions 1233–1244 are enriched in polar residues; it reads PNHSCQSPSPAS. Over residues 1348–1361 the composition is skewed to basic and acidic residues; sequence QSCDKLEPDRRRPP.

This sequence belongs to the CARMIL family. In terms of tissue distribution, widely expressed, with much higher levels in fetal tissues than in adult ones. Up-regulated in certain cancer tissues.

The protein localises to the cytoplasm. It is found in the cell membrane. This is Capping protein, Arp2/3 and myosin-I linker protein 3 from Homo sapiens (Human).